A 404-amino-acid chain; its full sequence is High affinity immunoglobulin gamma Fc receptor I (404 aa).

An N-terminal signal peptide occupies residues 1–24 (MILTSFGDDMWLLTTLLLWVPVGG). Topologically, residues 25–297 (EVVNATKAVI…QVLGPQSSAP (273 aa)) are extracellular. N-linked (GlcNAc...) asparagine glycosylation is found at asparagine 28, asparagine 48, asparagine 69, asparagine 168, and asparagine 249. Ig-like C2-type domains follow at residues 32-111 (AVIT…LQIH), 117-194 (LQAS…SITV), and 201-286 (PVLR…PELE). Disulfide bonds link cysteine 53/cysteine 95, cysteine 134/cysteine 177, and cysteine 221/cysteine 269. Residues 298-320 (VWFHILFYLSVGIMFSLNTVLYV) traverse the membrane as a helical segment. The segment at 321–342 (KIHRLQREKKYNLEVPLVSEQG) is interaction with EPB41L2. At 321–404 (KIHRLQREKK…DSTGAQTSQS (84 aa)) the chain is on the cytoplasmic side. A disordered region spans residues 346-404 (NSFQQVRSDGVYEEVTATASQTTPKEAPDGPRSSVGDCGPEQPEPLPPSDSTGAQTSQS). At serine 347 the chain carries Phosphoserine. At threonine 368 the chain carries Phosphothreonine. A compositionally biased stretch (polar residues) spans 394–404 (SDSTGAQTSQS).

The protein belongs to the immunoglobulin superfamily. FCGR1 family. In terms of assembly, interacts with FCERG1; forms a functional signaling complex. Interacts with FLNA; prevents FCGR1A degradation. Interacts with EPB41L2, LAT and PPL. Interacts with HCK and LYN. N-glycosylated. In terms of processing, phosphorylated on serine residues. Macrophage-specific.

Its subcellular location is the cell membrane. Its function is as follows. High affinity receptor for the Fc region of immunoglobulins gamma. Functions in both innate and adaptive immune responses. The protein is High affinity immunoglobulin gamma Fc receptor I (Fcgr1) of Mus musculus (Mouse).